Consider the following 151-residue polypeptide: Ribosome maturation factor RimP (151 aa).

Belongs to the RimP family.

Its subcellular location is the cytoplasm. Functionally, required for maturation of 30S ribosomal subunits. The polypeptide is Ribosome maturation factor RimP (Shewanella denitrificans (strain OS217 / ATCC BAA-1090 / DSM 15013)).